Consider the following 1860-residue polypeptide: Collagen alpha-1(XXVII) chain (1860 aa).

Positions 1–41 (MGAGSARGARGTAAAAAARGGGFLFSWILVSFACHLASTQG) are cleaved as a signal peptide. Residues 42-624 (APEDVDILQR…AGSTPFPLLM (583 aa)) constitute a propeptide, N-terminal propeptide. Residues 71 to 236 (QSGFIFTQRA…NYCTHLRKQC (166 aa)) form the Laminin G-like domain. N271 is a glycosylation site (N-linked (GlcNAc...) asparagine). Disordered regions lie at residues 278–608 (ALGS…TSSG), 625–772 (GPPG…GSDG), and 851–1625 (LKGD…IQLQ). 2 stretches are compositionally biased toward polar residues: residues 298–309 (TKPQRTSPTNPH) and 386–409 (HPTQ…QVPP). The segment covering 432-445 (MPRPPPPSTRPLPP) has biased composition (pro residues). Low complexity-rich tracts occupy residues 446–457 (TTSSSKKPIPTL) and 485–505 (TALS…RPPA). The segment covering 509–518 (PPTSGTSTPR) has biased composition (polar residues). Low complexity-rich tracts occupy residues 572 to 588 (TTRP…QTTP) and 599 to 608 (SSSPRPTSSG). Collagen-like domains are found at residues 625–679 (GPPG…GDPG), 688–747 (GAKG…PGPV), 748–807 (GDPG…DGNP), 808–867 (GELG…SGDP), 871–930 (GDKG…KGKP), 931–990 (GARG…PGPV), 1003–1062 (GEPG…RGAK), 1066–1125 (GPRG…PGTK), 1126–1185 (GLPG…IGQR), 1192–1251 (GDSG…QGEK), 1258–1317 (GAKG…KGIV), 1318–1378 (GPLG…RGKP), 1382–1441 (GQPG…EGIA), 1442–1501 (GPDG…PGQL), 1502–1561 (GPPG…QGPR), and 1562–1621 (GPPG…PGGP). Residues 625 to 1618 (GPPGPKGDCG…RGRPGPPGPP (994 aa)) are triple-helical region. A compositionally biased stretch (pro residues) spans 654–669 (RGPPGPYGNPGLPGPP). Residues 714–734 (PGPAGHPGEQGQPGPEGSPGA) show a composition bias toward low complexity. 2 stretches are compositionally biased toward low complexity: residues 911 to 924 (FPGD…NGPE) and 932 to 944 (ARGL…QLGP). Over residues 1033 to 1042 (GMPGGMGTPG) the composition is skewed to gly residues. Pro residues predominate over residues 1043-1053 (EPGPQGPPGSR). Residues 1130–1142 (EPGPQGPQGPIGP) show a composition bias toward pro residues. Composition is skewed to basic and acidic residues over residues 1202–1220 (LKGD…EKGQ) and 1241–1253 (PEGK…EKGR). Composition is skewed to basic and acidic residues over residues 1326 to 1338 (KGEK…DGKA) and 1350 to 1360 (PVGDRGDRGEP). The span at 1449–1458 (RDGQAGQQGE) shows a compositional bias: low complexity. Over residues 1572–1587 (IVGPLGILGPSGLPGP) the composition is skewed to low complexity. Positions 1603–1620 (RGPPGPRGRPGPPGPPGG) are enriched in pro residues. Positions 1622-1860 (IQLQQDDLGA…RLEVGPACFL (239 aa)) are cleaved as a propeptide — C-terminal propeptide. The region spanning 1660–1860 (GEIFKTLHYL…RLEVGPACFL (201 aa)) is the Fibrillar collagen NC1 domain. Cystine bridges form between C1690–C1722, C1731–C1858, and C1767–C1811. The Ca(2+) site is built by D1708, N1710, C1713, and D1716. A glycan (N-linked (GlcNAc...) asparagine) is linked at N1769.

This sequence belongs to the fibrillar collagen family.

The protein localises to the secreted. It is found in the extracellular space. Its subcellular location is the extracellular matrix. Plays a role during the calcification of cartilage and the transition of cartilage to bone. The polypeptide is Collagen alpha-1(XXVII) chain (COL27A1) (Homo sapiens (Human)).